Reading from the N-terminus, the 532-residue chain is Probable calcium-binding mitochondrial carrier CBG00135 (532 aa).

EF-hand domains lie at 70-105 (EKEK…QTPH), 107-136 (PATM…NYVI), 137-172 (AHEA…MGVN), and 173-208 (LDDH…YPST). The Ca(2+) site is built by Asp-83, Asp-85, Asp-87, Ser-89, and Asp-94. Positions 150, 152, 154, 156, and 161 each coordinate Ca(2+). Solcar repeat units follow at residues 243–329 (GVWW…IKRW), 339–425 (LTTY…LKSC), and 436–526 (PGVL…VRKQ). A run of 6 helical transmembrane segments spans residues 249–266 (LVAG…TAPF), 304–323 (GNGI…FMSY), 349–362 (SSAG…IYPM), 400–419 (GYLP…LTVY), 442–459 (LACG…SYPL), and 501–518 (GITP…ISYV).

This sequence belongs to the mitochondrial carrier (TC 2.A.29) family.

Its subcellular location is the mitochondrion inner membrane. Calcium-dependent mitochondrial solute carrier. This Caenorhabditis briggsae protein is Probable calcium-binding mitochondrial carrier CBG00135.